The following is a 649-amino-acid chain: Threonine--tRNA ligase (649 aa).

Positions 1-60 (MHVTLPDGKQLDLQPGATALDAAKAIGPRLAQDALGATANGELTDLMTPLSDGASITLIT) constitute a TGS domain. The catalytic stretch occupies residues 248-544 (DHRKLGKELE…LIEHYAGDFP (297 aa)). 3 residues coordinate Zn(2+): Cys-341, His-392, and His-521.

Belongs to the class-II aminoacyl-tRNA synthetase family. Homodimer. Zn(2+) is required as a cofactor.

It localises to the cytoplasm. It catalyses the reaction tRNA(Thr) + L-threonine + ATP = L-threonyl-tRNA(Thr) + AMP + diphosphate + H(+). In terms of biological role, catalyzes the attachment of threonine to tRNA(Thr) in a two-step reaction: L-threonine is first activated by ATP to form Thr-AMP and then transferred to the acceptor end of tRNA(Thr). Also edits incorrectly charged L-seryl-tRNA(Thr). The protein is Threonine--tRNA ligase of Deinococcus radiodurans (strain ATCC 13939 / DSM 20539 / JCM 16871 / CCUG 27074 / LMG 4051 / NBRC 15346 / NCIMB 9279 / VKM B-1422 / R1).